The sequence spans 418 residues: Tubulin alpha chain (418 aa).

GTP-binding residues include Gln-11, Glu-71, Ser-140, Gly-144, Thr-179, Asn-206, and Asn-228. Glu-71 contacts Mg(2+). The active site involves Glu-255.

This sequence belongs to the tubulin family. In terms of assembly, dimer of alpha and beta chains. A typical microtubule is a hollow water-filled tube with an outer diameter of 25 nm and an inner diameter of 15 nM. Alpha-beta heterodimers associate head-to-tail to form protofilaments running lengthwise along the microtubule wall with the beta-tubulin subunit facing the microtubule plus end conferring a structural polarity. Microtubules usually have 13 protofilaments but different protofilament numbers can be found in some organisms and specialized cells. It depends on Mg(2+) as a cofactor.

Its subcellular location is the cytoplasm. It is found in the cytoskeleton. The enzyme catalyses GTP + H2O = GDP + phosphate + H(+). In terms of biological role, tubulin is the major constituent of microtubules, a cylinder consisting of laterally associated linear protofilaments composed of alpha- and beta-tubulin heterodimers. Microtubules grow by the addition of GTP-tubulin dimers to the microtubule end, where a stabilizing cap forms. Below the cap, tubulin dimers are in GDP-bound state, owing to GTPase activity of alpha-tubulin. This chain is Tubulin alpha chain (TUB1), found in Ajellomyces capsulatus (Darling's disease fungus).